Reading from the N-terminus, the 184-residue chain is ATP synthase subunit b, chloroplastic (184 aa).

The chain crosses the membrane as a helical span at residues 31–49 (IINPSVVLSVLIYFGKGVL).

The protein belongs to the ATPase B chain family. As to quaternary structure, F-type ATPases have 2 components, F(1) - the catalytic core - and F(0) - the membrane proton channel. F(1) has five subunits: alpha(3), beta(3), gamma(1), delta(1), epsilon(1). F(0) has four main subunits: a(1), b(1), b'(1) and c(10-14). The alpha and beta chains form an alternating ring which encloses part of the gamma chain. F(1) is attached to F(0) by a central stalk formed by the gamma and epsilon chains, while a peripheral stalk is formed by the delta, b and b' chains.

Its subcellular location is the plastid. The protein resides in the chloroplast thylakoid membrane. Functionally, f(1)F(0) ATP synthase produces ATP from ADP in the presence of a proton or sodium gradient. F-type ATPases consist of two structural domains, F(1) containing the extramembraneous catalytic core and F(0) containing the membrane proton channel, linked together by a central stalk and a peripheral stalk. During catalysis, ATP synthesis in the catalytic domain of F(1) is coupled via a rotary mechanism of the central stalk subunits to proton translocation. Its function is as follows. Component of the F(0) channel, it forms part of the peripheral stalk, linking F(1) to F(0). The sequence is that of ATP synthase subunit b, chloroplastic from Pinus koraiensis (Korean pine).